We begin with the raw amino-acid sequence, 180 residues long: Large ribosomal subunit protein uL5 (180 aa).

This sequence belongs to the universal ribosomal protein uL5 family. As to quaternary structure, part of the 50S ribosomal subunit; part of the 5S rRNA/L5/L18/L25 subcomplex. Contacts the 5S rRNA and the P site tRNA. Forms a bridge to the 30S subunit in the 70S ribosome.

Its function is as follows. This is one of the proteins that bind and probably mediate the attachment of the 5S RNA into the large ribosomal subunit, where it forms part of the central protuberance. In the 70S ribosome it contacts protein S13 of the 30S subunit (bridge B1b), connecting the 2 subunits; this bridge is implicated in subunit movement. Contacts the P site tRNA; the 5S rRNA and some of its associated proteins might help stabilize positioning of ribosome-bound tRNAs. The sequence is that of Large ribosomal subunit protein uL5 from Anaeromyxobacter dehalogenans (strain 2CP-1 / ATCC BAA-258).